Consider the following 188-residue polypeptide: Xanthine phosphoribosyltransferase (188 aa).

Xanthine contacts are provided by Leu-20 and Asn-27. 127 to 131 is a binding site for 5-phospho-alpha-D-ribose 1-diphosphate; it reads ANGNA. Position 155 (Lys-155) interacts with xanthine.

It belongs to the purine/pyrimidine phosphoribosyltransferase family. Xpt subfamily. Homodimer.

It is found in the cytoplasm. It carries out the reaction XMP + diphosphate = xanthine + 5-phospho-alpha-D-ribose 1-diphosphate. The protein operates within purine metabolism; XMP biosynthesis via salvage pathway; XMP from xanthine: step 1/1. Converts the preformed base xanthine, a product of nucleic acid breakdown, to xanthosine 5'-monophosphate (XMP), so it can be reused for RNA or DNA synthesis. The protein is Xanthine phosphoribosyltransferase of Phocaeicola vulgatus (strain ATCC 8482 / DSM 1447 / JCM 5826 / CCUG 4940 / NBRC 14291 / NCTC 11154) (Bacteroides vulgatus).